The following is a 662-amino-acid chain: uncharacterized protein (662 aa).

The next 16 membrane-spanning stretches (helical) occupy residues 10 to 30 (SSIV…GWPV), 46 to 66 (PVIG…FLPI), 68 to 88 (AINL…LSKG), 101 to 121 (GFCW…EIIP), 167 to 187 (LIYY…TGAT), 193 to 213 (IALT…LAVA), 217 to 237 (SAYA…KPAV), 263 to 283 (PWVP…MAYL), 285 to 305 (ILYS…AILA), 312 to 332 (MWAG…LSVS), 342 to 362 (EVLI…AVLI), 373 to 393 (KVVE…LDIP), 394 to 414 (GFWL…FLIW), 432 to 452 (ALTV…SVIM), 460 to 480 (VLIP…STTI), and 485 to 505 (LVGR…ILVG).

It is found in the cell membrane. This is an uncharacterized protein from Sinorhizobium fredii (strain NBRC 101917 / NGR234).